Reading from the N-terminus, the 233-residue chain is MNHLNKLMERLGHQFNNLELLKIALTHCSSGADNNERLEFLGDSVLGFIIASELYQRRPQAREGDLSRMRASMVNGDELAQMSTKLGINEYLQLGVGEQKSGGKRRRSILADALEAIVGAIYIDAGLETCRRCVLNWYGERVDDLSKLSPKKDAKSLLQEWLQARRLPLPTYEVKITGEAHAQTFTVNCYVKGLPHKTEGVNTTRRRAEQIAAKRFLELLDDGKGDGITERDQ.

Residues 4 to 126 (LNKLMERLGH…IVGAIYIDAG (123 aa)) form the RNase III domain. Glu39 lines the Mg(2+) pocket. Asp43 is a catalytic residue. Mg(2+) contacts are provided by Asp112 and Glu115. Residue Glu115 is part of the active site. The 70-residue stretch at 153–222 (DAKSLLQEWL…AKRFLELLDD (70 aa)) folds into the DRBM domain.

This sequence belongs to the ribonuclease III family. In terms of assembly, homodimer. Requires Mg(2+) as cofactor.

It localises to the cytoplasm. The enzyme catalyses Endonucleolytic cleavage to 5'-phosphomonoester.. In terms of biological role, digests double-stranded RNA. Involved in the processing of primary rRNA transcript to yield the immediate precursors to the large and small rRNAs (23S and 16S). Processes some mRNAs, and tRNAs when they are encoded in the rRNA operon. Processes pre-crRNA and tracrRNA of type II CRISPR loci if present in the organism. This is Ribonuclease 3 from Coxiella burnetii (strain RSA 331 / Henzerling II).